Reading from the N-terminus, the 1164-residue chain is Phospholipid-transporting ATPase IA (1164 aa).

At 1–65 (MPTMRRTVSE…TAKYNIITFL (65 aa)) the chain is on the cytoplasmic side. Ser25 carries the post-translational modification Phosphoserine. Thr28 bears the Phosphothreonine mark. Ser29 bears the Phosphoserine mark. A helical membrane pass occupies residues 66–86 (PRFLYSQFRRAANSFFLFIAL). Topologically, residues 87-92 (LQQIPD) are exoplasmic loop. Residues 93-115 (VSPTGRYTTLVPLLFILAVAAIK) form a helical membrane-spanning segment. Residues 116–297 (EIIEDIKRHK…SNVERITNVQ (182 aa)) lie on the Cytoplasmic side of the membrane. The helical transmembrane segment at 298 to 319 (ILILFCILIAMSLVCSVGSAIW) threads the bilayer. Residues 320-344 (NRRHSGKDWYLNLNYGGASNFGLNF) are Exoplasmic loop-facing. A helical transmembrane segment spans residues 345 to 366 (LTFIILFNNLIPISLLVTLEVV). At 367–857 (KFTQAYFINW…GAWNYNRVSK (491 aa)) the chain is on the cytoplasmic side. Asp409 acts as the 4-aspartylphosphate intermediate in catalysis. 3 residues coordinate ATP: Asp409, Lys410, and Thr411. Asp409 contributes to the Mg(2+) binding site. Thr411 serves as a coordination point for Mg(2+). Residue Ser443 is modified to Phosphoserine. Residues Glu508, Phe549, Lys572, Arg605, Thr685, Gly686, Asp687, 741–748 (ALIIDGKT), Arg775, and Lys781 each bind ATP. Asp801 is a binding site for Mg(2+). ATP is bound by residues Asn804 and Asp805. Position 805 (Asp805) interacts with Mg(2+). Residues 858 to 878 (CILYCFYKNIVLYIIEIWFAF) traverse the membrane as a helical segment. Over 879–890 (VNGFSGQILFER) the chain is Exoplasmic loop. The chain crosses the membrane as a helical span at residues 891–910 (WCIGLYNVMFTAMPPLTLGI). Residues 911-940 (FERSCRKENMLKYPELYKTSQNALDFNTKV) lie on the Cytoplasmic side of the membrane. A helical membrane pass occupies residues 941–962 (FWVHCLNGLFHSVILFWFPLKA). Residues 963–976 (LQYGTAFGNGKTSD) lie on the Exoplasmic loop side of the membrane. The helical transmembrane segment at 977-999 (YLLLGNFVYTFVVITVCLKAGLE) threads the bilayer. The Cytoplasmic portion of the chain corresponds to 1000-1005 (TSYWTW). Residues 1006–1026 (FSHIAIWGSIALWVVFFGIYS) form a helical membrane-spanning segment. Residues 1027-1044 (SLWPAIPMAPDMSGEAAM) are Exoplasmic loop-facing. The chain crosses the membrane as a helical span at residues 1045–1070 (LFSSGVFWMGLLFIPVASLLLDVVYK). The Cytoplasmic portion of the chain corresponds to 1071 to 1164 (VIKRTAFKTL…DTTKQRPDEW (94 aa)). 1095-1102 (GAVVLGKS) is a binding site for ATP. Position 1126 is a phosphoserine (Ser1126).

Belongs to the cation transport ATPase (P-type) (TC 3.A.3) family. Type IV subfamily. As to quaternary structure, component of a P4-ATPase flippase complex which consists of a catalytic alpha subunit and an accessory beta subunit. Interacts with TMEM30A to form a flippase complex; this complex forms an intermediate phosphoenzyme. Interacts with TMEM30B; this interaction is reported conflictingly. The cofactor is Mg(2+). Post-translationally, cleaved by calpain in a caspase- and calcium influx-dependent manner during platelet apoptosis leading to a 100 kDa polypeptide. In terms of tissue distribution, found in most adult tissues except liver, testis and placenta. Most abundant in heart, brain and skeletal muscle. Also detected in fetal tissues. Isoform 1 is only detected in brain, skeletal muscle and heart and is the most abundant form in skeletal muscle. Highly expressed in platelets.

It localises to the cytoplasmic vesicle. Its subcellular location is the secretory vesicle. The protein resides in the chromaffin granule membrane. The protein localises to the cytoplasmic granule. It is found in the cell membrane. It localises to the endoplasmic reticulum. Its subcellular location is the golgi apparatus. The catalysed reaction is ATP + H2O + phospholipidSide 1 = ADP + phosphate + phospholipidSide 2.. It carries out the reaction a 1,2-diacyl-sn-glycero-3-phospho-L-serine(out) + ATP + H2O = a 1,2-diacyl-sn-glycero-3-phospho-L-serine(in) + ADP + phosphate + H(+). With respect to regulation, ATPase activity is stimulated by phosphatidylserine (PS) and minimally by phosphatidylethanolamine (PE). ATPase activity is inhibited by beryllium fluoride and aluminum trifluoride. Catalytic component of a P4-ATPase flippase complex which catalyzes the hydrolysis of ATP coupled to the transport of aminophospholipids from the outer to the inner leaflet of various membranes and ensures the maintenance of asymmetric distribution of phospholipids. Phospholipid translocation also seems to be implicated in vesicle formation and in uptake of lipid signaling molecules. In vitro, its ATPase activity is selectively and stereospecifically stimulated by phosphatidylserine (PS). The flippase complex ATP8A1:TMEM30A seems to play a role in regulation of cell migration probably involving flippase-mediated translocation of phosphatidylethanolamine (PE) at the cell membrane. Acts as aminophospholipid translocase at the cell membrane in neuronal cells. The chain is Phospholipid-transporting ATPase IA from Homo sapiens (Human).